The primary structure comprises 873 residues: Sine oculis-binding protein homolog (873 aa).

Basic and acidic residues predominate over residues 1 to 14 (MAEMEKEGRPPENK). Residues 1–26 (MAEMEKEGRPPENKRSRKPAHPVKRE) form a disordered region. 2 FCS-type zinc fingers span residues 142-180 (DDVS…KCFA) and 216-256 (FKNN…KCLN). Disordered stretches follow at residues 307-338 (ARRK…SDTA), 413-485 (RGPP…GAPL), 550-608 (KPPS…NQAQ), 742-766 (STEG…ELAV), and 779-811 (SNCH…NPAD). The segment covering 312 to 338 (PSPASAAGQIQGPGPSASTTASPSDTA) has biased composition (low complexity). The span at 460–485 (IHPPTTPTMPGNPPGLLPPPPPGAPL) shows a compositional bias: pro residues. Polar residues predominate over residues 554 to 570 (GFSSNGENFIPSNSSET). The span at 571–603 (PGGKPPNSSSSPRESKQGSSKPSDSSPSCSGQS) shows a compositional bias: low complexity. Residues 783–793 (LEGDTGKKAGE) are compositionally biased toward basic and acidic residues.

The protein belongs to the SOBP family.

Functionally, implicated in development of the cochlea. The polypeptide is Sine oculis-binding protein homolog (Gallus gallus (Chicken)).